We begin with the raw amino-acid sequence, 297 residues long: ATP synthase gamma chain (297 aa).

This sequence belongs to the ATPase gamma chain family. F-type ATPases have 2 components, CF(1) - the catalytic core - and CF(0) - the membrane proton channel. CF(1) has five subunits: alpha(3), beta(3), gamma(1), delta(1), epsilon(1). CF(0) has three main subunits: a, b and c.

The protein localises to the cell membrane. Produces ATP from ADP in the presence of a proton gradient across the membrane. The gamma chain is believed to be important in regulating ATPase activity and the flow of protons through the CF(0) complex. The sequence is that of ATP synthase gamma chain from Renibacterium salmoninarum (strain ATCC 33209 / DSM 20767 / JCM 11484 / NBRC 15589 / NCIMB 2235).